Here is a 453-residue protein sequence, read N- to C-terminus: UPF0210 protein Mbar_A3181 (453 aa).

The protein belongs to the UPF0210 family.

The protein is UPF0210 protein Mbar_A3181 of Methanosarcina barkeri (strain Fusaro / DSM 804).